Reading from the N-terminus, the 982-residue chain is Protein lin-10 (982 aa).

Residues 1-16 are compositionally biased toward polar residues; the sequence is MSSEAVAQATAATTSP. Disordered regions lie at residues 1–55, 119–228, 269–327, 432–511, and 525–593; these read MSSE…MIPP, QPAL…RTDS, TVAD…STVP, FAQQ…GTDD, and QREQ…SKET. A compositionally biased stretch (gly residues) spans 33-44; it reads KGGGAGGGGGGE. Positions 119-134 are enriched in low complexity; sequence QPALQQPRPSSQASSS. Polar residues-rich tracts occupy residues 143–156 and 169–190; these read RQTAGSVVSSNVSP and ETSGVVQNNDELLVPTSTSSDV. A compositionally biased stretch (basic and acidic residues) spans 211–228; it reads GEEKSEEKRKLSGDRTDS. Residues 301 to 318 are compositionally biased toward polar residues; the sequence is SLNQLRSSFNLPDDSTTV. Low complexity-rich tracts occupy residues 432–445 and 454–464; these read FAQQQIAQSAAPTP and PSTSSGPSGAL. The span at 490 to 501 shows a compositional bias: polar residues; sequence NGTSTSTTNGAQ. Residues 539–550 are compositionally biased toward low complexity; it reads QEAATAAQEAAE. The span at 577 to 593 shows a compositional bias: basic and acidic residues; that stretch reads GAERRGSVDKKKNSKET. Residues 604 to 788 form the PID domain; it reads GVLFRARYLG…VLNSQELLGD (185 aa). 2 consecutive PDZ domains span residues 801-886 and 892-968; these read EVVV…TVVS and EVRI…MPTS.

Interacts (via N-terminus) with egl-9 isoform e (via catalytic domain); the interaction regulates its trafficking; the interaction is direct. Interacts with rab-6.2 (in GTP-bound form). Post-translationally, phosphorylated on multiple Ser and Thr residues by cdk-5 which regulates its localization. In terms of processing, may be hydroxylated by egl-9 isoform e on multiple Pro residues which may prevent phosphorylation by cdk-5. Expressed in vulval epithelial cells and neurons.

The protein resides in the golgi apparatus. It localises to the golgi stack membrane. Its subcellular location is the trans-Golgi network membrane. It is found in the cytoplasm. The protein localises to the synapse. The protein resides in the perikaryon. Its function is as follows. Required specifically for the determination of 3 vulval precursor cell fates P5.p, P6.p and P7.p during late second and early third larval stages; required for basolateral localization of receptor tyrosine kinase let-23. Could have a general but redundant role in development, functioning in diverse cell lineages to control cell fates. Regulates the trafficking of the glr-1 subunit of AMPA-type glutamate receptors (AMPRs) in the ventral nerve cord. This may be partly through interacting with the small GTPase rab-6.2 in its active GTP-bound state. The protein is Protein lin-10 of Caenorhabditis elegans.